Here is a 202-residue protein sequence, read N- to C-terminus: Small ribosomal subunit protein uS4 (202 aa).

The 64-residue stretch at 93–156 (RRLDNMVYRL…KDLKIISEAV (64 aa)) folds into the S4 RNA-binding domain.

This sequence belongs to the universal ribosomal protein uS4 family. As to quaternary structure, part of the 30S ribosomal subunit. Contacts protein S5. The interaction surface between S4 and S5 is involved in control of translational fidelity.

One of the primary rRNA binding proteins, it binds directly to 16S rRNA where it nucleates assembly of the body of the 30S subunit. Its function is as follows. With S5 and S12 plays an important role in translational accuracy. In Pediococcus pentosaceus (strain ATCC 25745 / CCUG 21536 / LMG 10740 / 183-1w), this protein is Small ribosomal subunit protein uS4.